The sequence spans 423 residues: MGTHVIKMPDIGEGIAQVELVEWFVKVGDIIAEDQVVADVMTDKATVEIPSPVSGKVLALGGQPGEVMAVGSELIRIEVEGSGNHVDVPQAKPAEVPAAPVAAKPEPQKDVKPAAYQASASHEAAPIVPRQPGDKPLASPAVRKRALDAGIELRYVHGSGPAGRILHEDLDAFMSKPQSAAGQTPNGYARRTDSEQVPVIGLRRKIAQRMQDAKRRVAHFSYVEEIDVTALEALRQQLNSKHGDSRGKLTLLPFLVRALVVALRDFPQINATYDDEAQIITRHGAVHVGIATQGDNGLMVPVLRHAEAGSLWANAGEISRLANAARNNKASREELSGSTITLTSLGALGGIVSTPVVNTPEVAIVGVNRMVERPVVIDGQIVVRKMMNLSSSFDHRVVDGMDAALFIQAVRGLLEQPACLFVE.

The Lipoyl-binding domain maps to 3 to 78 (THVIKMPDIG…AVGSELIRIE (76 aa)). K44 is subject to N6-lipoyllysine. The Peripheral subunit-binding (PSBD) domain occupies 137-174 (LASPAVRKRALDAGIELRYVHGSGPAGRILHEDLDAFM). Catalysis depends on residues H395 and D399.

It belongs to the 2-oxoacid dehydrogenase family. In terms of assembly, forms a 24-polypeptide structural core with octahedral symmetry. Requires (R)-lipoate as cofactor.

It carries out the reaction N(6)-[(R)-dihydrolipoyl]-L-lysyl-[protein] + 2-methylpropanoyl-CoA = N(6)-[(R)-S(8)-2-methylpropanoyldihydrolipoyl]-L-lysyl-[protein] + CoA. In terms of biological role, the branched-chain alpha-keto dehydrogenase complex catalyzes the overall conversion of alpha-keto acids to acyl-CoA and CO(2). It contains multiple copies of three enzymatic components: branched-chain alpha-keto acid decarboxylase (E1), lipoamide acyltransferase (E2) and lipoamide dehydrogenase (E3). The protein is Lipoamide acyltransferase component of branched-chain alpha-keto acid dehydrogenase complex (bkdB) of Pseudomonas putida (Arthrobacter siderocapsulatus).